We begin with the raw amino-acid sequence, 558 residues long: Magnesium-chelatase 60 kDa subunit (558 aa).

Disordered stretches follow at residues 234–268 (MPAS…GEEM) and 298–325 (MARG…MGRL). Positions 240-254 (APPEPEPEPPEDQPD) are enriched in acidic residues. Over residues 298–308 (MARGATGTGSA) the composition is skewed to low complexity. The region spanning 376-555 (VLIFAVDASG…HKLSNVLGAA (180 aa)) is the VWFA domain.

Belongs to the Mg-chelatase subunits D/I family.

It carries out the reaction protoporphyrin IX + Mg(2+) + ATP + H2O = Mg-protoporphyrin IX + ADP + phosphate + 3 H(+). The protein operates within porphyrin-containing compound metabolism; bacteriochlorophyll biosynthesis. Involved in bacteriochlorophyll biosynthesis; introduces a magnesium ion into protoporphyrin IX to yield Mg-protoporphyrin IX. The sequence is that of Magnesium-chelatase 60 kDa subunit (bchD) from Cereibacter sphaeroides (strain ATCC 17023 / DSM 158 / JCM 6121 / CCUG 31486 / LMG 2827 / NBRC 12203 / NCIMB 8253 / ATH 2.4.1.) (Rhodobacter sphaeroides).